A 122-amino-acid polypeptide reads, in one-letter code: Large ribosomal subunit protein uL14 (122 aa).

This sequence belongs to the universal ribosomal protein uL14 family. In terms of assembly, part of the 50S ribosomal subunit. Forms a cluster with proteins L3 and L19. In the 70S ribosome, L14 and L19 interact and together make contacts with the 16S rRNA in bridges B5 and B8.

Functionally, binds to 23S rRNA. Forms part of two intersubunit bridges in the 70S ribosome. The polypeptide is Large ribosomal subunit protein uL14 (Salinispora tropica (strain ATCC BAA-916 / DSM 44818 / JCM 13857 / NBRC 105044 / CNB-440)).